The chain runs to 322 residues: Eukaryotic translation initiation factor 3 subunit I (322 aa).

5 WD repeats span residues 4–43 (GHERSITQIKYNREGDLLFSSSKDQKPNVWYSLNGERLGT), 46–85 (GHQGAVWCLDVDWESRKLITAGGDMTAKLWDVEYGTVIAS), 141–180 (MTESKITSMLWGPLDETIITGHDNGNIAIWDVRKGQKVVD), 184–223 (DHTGVINDMQLSKDGTMFVTASKDATAKLFDSETLMCLKT), and 281–322 (GHFG…NIFE).

This sequence belongs to the eIF-3 subunit I family. In terms of assembly, component of the eukaryotic translation initiation factor 3 (eIF-3) complex. The eIF-3 complex interacts with pix.

The protein resides in the cytoplasm. Its function is as follows. Component of the eukaryotic translation initiation factor 3 (eIF-3) complex, which is involved in protein synthesis of a specialized repertoire of mRNAs and, together with other initiation factors, stimulates binding of mRNA and methionyl-tRNAi to the 40S ribosome. The eIF-3 complex specifically targets and initiates translation of a subset of mRNAs involved in cell proliferation. This is Eukaryotic translation initiation factor 3 subunit I from Drosophila willistoni (Fruit fly).